A 208-amino-acid polypeptide reads, in one-letter code: Thymidylate kinase (208 aa).

11–18 lines the ATP pocket; sequence GIEGAGKT.

This sequence belongs to the thymidylate kinase family.

It catalyses the reaction dTMP + ATP = dTDP + ADP. In terms of biological role, phosphorylation of dTMP to form dTDP in both de novo and salvage pathways of dTTP synthesis. The chain is Thymidylate kinase from Hahella chejuensis (strain KCTC 2396).